Consider the following 110-residue polypeptide: Envelope glycoprotein N (110 aa).

Positions 1–17 (MTASTVALALFVASILG) are cleaved as a signal peptide. The Virion surface portion of the chain corresponds to 18–80 (HCWVTANSTG…SLSSFSSVWA (63 aa)). The segment covering 28–41 (VASSTERSSPSTAG) has biased composition (polar residues). A disordered region spans residues 28 to 51 (VASSTERSSPSTAGLSARPSPGPT). A helical transmembrane segment spans residues 81 to 101 (LINALLVVVATFFYLVYLCFF). Over 102–110 (KFVDEVVHA) the chain is Intravirion.

This sequence belongs to the herpesviridae glycoprotein N family. In terms of assembly, interacts (via N-terminus) with gM (via N-terminus). The gM-gN heterodimer forms the gCII complex. Post-translationally, O-glycosylated. Contains alpha 2,6-sialic acid residues. N-glycosylated.

It is found in the virion membrane. Its subcellular location is the host membrane. The protein resides in the host Golgi apparatus. The protein localises to the host trans-Golgi network. In terms of biological role, envelope glycoprotein necessary for proper maturation of gM and modulation of its membrane fusion activity. Also plays a critical role in virion morphogenesis. The protein is Envelope glycoprotein N of Homo sapiens (Human).